The following is a 148-amino-acid chain: Cofilin/actin-depolymerizing factor homolog (148 aa).

Residues 4 to 143 (GVTVSDVCKT…SREAVEEKLR (140 aa)) enclose the ADF-H domain. Residues 19-23 (KKDKK) carry the Nuclear localization signal motif.

The protein belongs to the actin-binding proteins ADF family. In terms of processing, phosphorylated in vitro by protein kinase LIMK1. Phosphorylation is required for inactivation of tsr and for cell proliferation and axon growth. Phosphorylation is negatively regulated by the panthothenate kinase fbl which catalyzes the first step in the conversion of panthothenic acid to coenzyme A. Post-translationally, dephosphorylated by protein phosphatase ssh which activates tsr.

The protein resides in the cytoplasm. Its subcellular location is the cytoskeleton. The protein localises to the nucleus matrix. Functionally, exhibits F-actin depolymerizing activity and regulates actin cytoskeleton dynamics. Required for cytokinesis in both mitotic and meiotic cells and for aster migration and separation. Promotes cell motility during ovary development and oogenesis. During larval development, required for the cell rearrangement needed for formation of terminal filaments which are stacks of somatic cells that are important for the initiation of ovarioles. Also required for border cell migration during oogenesis. During border cell migration, required for actin turnover and lamellipodial protrusion. Required for the establishment of planar cell polarity (PCP) where cells adopt a uniform orientation within the plane of an epithelium. During establishment of PCP, required for the redistribution of the PCP core proteins fz and stan/fmi to the proximodistal cell boundary. During pupal development, required for elongation of the retinal cell body and for rhabdomere morphogenesis. Required for mushroom body neuroblast proliferation and axon growth. Plays a role in the positive regulation of protein secretion. Plays a role in the regulation of nuclear localization of actin. Required for the maintenance of epithelial integrity by controlling cell junctions and is also necessary for cell survival and tissue growth through regulation of JNK and yki signaling. The protein is Cofilin/actin-depolymerizing factor homolog of Drosophila melanogaster (Fruit fly).